The following is a 356-amino-acid chain: Alanine racemase, catabolic (356 aa).

Lys-35 acts as the Proton acceptor; specific for D-alanine in catalysis. Lys-35 carries the post-translational modification N6-(pyridoxal phosphate)lysine. Arg-130 is a substrate binding site. Tyr-253 serves as the catalytic Proton acceptor; specific for L-alanine. Met-301 provides a ligand contact to substrate.

Belongs to the alanine racemase family. Pyridoxal 5'-phosphate serves as cofactor.

It catalyses the reaction L-alanine = D-alanine. In terms of biological role, isomerizes L-alanine to D-alanine which is then oxidized to pyruvate by DadA. The chain is Alanine racemase, catabolic (dadB) from Klebsiella aerogenes (Enterobacter aerogenes).